We begin with the raw amino-acid sequence, 77 residues long: NAD(P)H-quinone oxidoreductase subunit L (77 aa).

A run of 2 helical transmembrane segments spans residues Leu12–Tyr32 and Leu47–Leu67.

It belongs to the complex I NdhL subunit family. In terms of assembly, NDH-1 can be composed of about 15 different subunits; different subcomplexes with different compositions have been identified which probably have different functions.

The protein localises to the cellular thylakoid membrane. The enzyme catalyses a plastoquinone + NADH + (n+1) H(+)(in) = a plastoquinol + NAD(+) + n H(+)(out). It catalyses the reaction a plastoquinone + NADPH + (n+1) H(+)(in) = a plastoquinol + NADP(+) + n H(+)(out). In terms of biological role, NDH-1 shuttles electrons from an unknown electron donor, via FMN and iron-sulfur (Fe-S) centers, to quinones in the respiratory and/or the photosynthetic chain. The immediate electron acceptor for the enzyme in this species is believed to be plastoquinone. Couples the redox reaction to proton translocation, and thus conserves the redox energy in a proton gradient. Cyanobacterial NDH-1 also plays a role in inorganic carbon-concentration. The chain is NAD(P)H-quinone oxidoreductase subunit L from Prochlorococcus marinus (strain MIT 9312).